Reading from the N-terminus, the 74-residue chain is Antitoxin VapB39 (74 aa).

Its function is as follows. Antitoxin component of a type II toxin-antitoxin (TA) system. This chain is Antitoxin VapB39 (vapB39), found in Mycobacterium tuberculosis (strain CDC 1551 / Oshkosh).